The chain runs to 557 residues: Dihydroxy-acid dehydratase (557 aa).

C50 lines the [2Fe-2S] cluster pocket. D82 serves as a coordination point for Mg(2+). C123 is a [2Fe-2S] cluster binding site. Positions 124 and 125 each coordinate Mg(2+). K125 bears the N6-carboxylysine mark. Position 195 (C195) interacts with [2Fe-2S] cluster. E447 lines the Mg(2+) pocket. S473 (proton acceptor) is an active-site residue.

Belongs to the IlvD/Edd family. In terms of assembly, homodimer. The cofactor is [2Fe-2S] cluster. Mg(2+) serves as cofactor.

It carries out the reaction (2R)-2,3-dihydroxy-3-methylbutanoate = 3-methyl-2-oxobutanoate + H2O. The catalysed reaction is (2R,3R)-2,3-dihydroxy-3-methylpentanoate = (S)-3-methyl-2-oxopentanoate + H2O. It participates in amino-acid biosynthesis; L-isoleucine biosynthesis; L-isoleucine from 2-oxobutanoate: step 3/4. The protein operates within amino-acid biosynthesis; L-valine biosynthesis; L-valine from pyruvate: step 3/4. In terms of biological role, functions in the biosynthesis of branched-chain amino acids. Catalyzes the dehydration of (2R,3R)-2,3-dihydroxy-3-methylpentanoate (2,3-dihydroxy-3-methylvalerate) into 2-oxo-3-methylpentanoate (2-oxo-3-methylvalerate) and of (2R)-2,3-dihydroxy-3-methylbutanoate (2,3-dihydroxyisovalerate) into 2-oxo-3-methylbutanoate (2-oxoisovalerate), the penultimate precursor to L-isoleucine and L-valine, respectively. The sequence is that of Dihydroxy-acid dehydratase from Burkholderia thailandensis (strain ATCC 700388 / DSM 13276 / CCUG 48851 / CIP 106301 / E264).